The sequence spans 270 residues: tRNA pseudouridine synthase A (270 aa).

Aspartate 60 (nucleophile) is an active-site residue. The tract at residues 107-111 (FHARF) is RNA binding. Tyrosine 118 contacts substrate. The segment at 168 to 172 (QCQSR) is interaction with tRNA.

The protein belongs to the tRNA pseudouridine synthase TruA family. In terms of assembly, homodimer.

The catalysed reaction is uridine(38/39/40) in tRNA = pseudouridine(38/39/40) in tRNA. In terms of biological role, formation of pseudouridine at positions 38, 39 and 40 in the anticodon stem and loop of transfer RNAs. This chain is tRNA pseudouridine synthase A, found in Escherichia coli O9:H4 (strain HS).